Here is a 102-residue protein sequence, read N- to C-terminus: MAAQKIRIRLKAYDHEVIDSSARKIVETVTRTGAQVAGPVPLPTEKNIYCVIRSPHKYKDSREHFEMRTHKRLIDILDPTPKTVDSLMRLDLPAGVDIEIKL.

The protein belongs to the universal ribosomal protein uS10 family. Part of the 30S ribosomal subunit.

Its function is as follows. Involved in the binding of tRNA to the ribosomes. The polypeptide is Small ribosomal subunit protein uS10 (Frankia alni (strain DSM 45986 / CECT 9034 / ACN14a)).